Here is a 358-residue protein sequence, read N- to C-terminus: UPF0725 protein At4g29550 (358 aa).

The tract at residues leucine 31–glutamine 82 is disordered. Basic and acidic residues predominate over residues serine 58 to histidine 67.

It belongs to the UPF0725 (EMB2204) family.

In Arabidopsis thaliana (Mouse-ear cress), this protein is UPF0725 protein At4g29550.